Consider the following 396-residue polypeptide: MPFLDKVKQQYEDWTRITPSNLLYDRALLLLFFVLLLIGLLAVSSASIPVGTRLFKDPFYFAKRDAIYVFLSCVTCYLCVQVPMEKWEQWHVRLFAFAIFLLILVLIPGIGLSVNGARRWIPMVLFNFQPAEFAKLALTCFLASYFTRKYDEVRSRKLSAFKPFALMGLMGLFLLSQPDLGSTVVLFVITFGLLFIVGANFWQFVGLMAFGGLLFVWLVLSSAYRLKRFTGFLDPFKDPYGTGFQLSNSLMAFGRGEWVGEGLGNSIQKLEYLPEAHTDFVMAVVGEEFGFLGILVIVILLGLLIFRAMKIGRESLLLEQRFKGFFAFGISFWIFFQGFVNLGMSLGLLPTKGLTFPLISYGGSSLIIMSMTIGLLLRIDHENRLMRIGQARLRDD.

Residues 1–27 (MPFLDKVKQQYEDWTRITPSNLLYDRA) are Cytoplasmic-facing. A helical membrane pass occupies residues 28–48 (LLLLFFVLLLIGLLAVSSASI). Over 49-64 (PVGTRLFKDPFYFAKR) the chain is Periplasmic. Residues 65 to 85 (DAIYVFLSCVTCYLCVQVPME) form a helical membrane-spanning segment. Topologically, residues 86–93 (KWEQWHVR) are cytoplasmic. Residues 94 to 114 (LFAFAIFLLILVLIPGIGLSV) form a helical membrane-spanning segment. The Periplasmic segment spans residues 115 to 122 (NGARRWIP). The helical transmembrane segment at 123 to 143 (MVLFNFQPAEFAKLALTCFLA) threads the bilayer. Topologically, residues 144–157 (SYFTRKYDEVRSRK) are cytoplasmic. The chain crosses the membrane as a helical span at residues 158-178 (LSAFKPFALMGLMGLFLLSQP). At 179-183 (DLGST) the chain is on the periplasmic side. A run of 2 helical transmembrane segments spans residues 184–204 (VVLF…FWQF) and 205–225 (VGLM…SAYR). The Periplasmic segment spans residues 226-285 (LKRFTGFLDPFKDPYGTGFQLSNSLMAFGRGEWVGEGLGNSIQKLEYLPEAHTDFVMAVV). A helical membrane pass occupies residues 286–306 (GEEFGFLGILVIVILLGLLIF). The Cytoplasmic segment spans residues 307–323 (RAMKIGRESLLLEQRFK). The chain crosses the membrane as a helical span at residues 324–344 (GFFAFGISFWIFFQGFVNLGM). At 345–355 (SLGLLPTKGLT) the chain is on the periplasmic side. A helical transmembrane segment spans residues 356–376 (FPLISYGGSSLIIMSMTIGLL). Topologically, residues 377–396 (LRIDHENRLMRIGQARLRDD) are cytoplasmic.

This sequence belongs to the SEDS family. FtsW subfamily.

It is found in the cell inner membrane. It catalyses the reaction [GlcNAc-(1-&gt;4)-Mur2Ac(oyl-L-Ala-gamma-D-Glu-L-Lys-D-Ala-D-Ala)](n)-di-trans,octa-cis-undecaprenyl diphosphate + beta-D-GlcNAc-(1-&gt;4)-Mur2Ac(oyl-L-Ala-gamma-D-Glu-L-Lys-D-Ala-D-Ala)-di-trans,octa-cis-undecaprenyl diphosphate = [GlcNAc-(1-&gt;4)-Mur2Ac(oyl-L-Ala-gamma-D-Glu-L-Lys-D-Ala-D-Ala)](n+1)-di-trans,octa-cis-undecaprenyl diphosphate + di-trans,octa-cis-undecaprenyl diphosphate + H(+). It participates in cell wall biogenesis; peptidoglycan biosynthesis. In terms of biological role, peptidoglycan polymerase that is essential for cell division. The sequence is that of Probable peptidoglycan glycosyltransferase FtsW from Pasteurella multocida (strain Pm70).